The following is a 27-amino-acid chain: Cupiennin-3b (27 aa).

Residue glutamate 27 is modified to Glutamic acid 1-amide.

Expressed by the venom gland.

The protein localises to the secreted. This is Cupiennin-3b from Cupiennius salei (American wandering spider).